Consider the following 86-residue polypeptide: Small ribosomal subunit protein bS20 (86 aa).

Basic residues predominate over residues 1 to 11; sequence MANIKQQKKRN. The interval 1 to 21 is disordered; it reads MANIKQQKKRNKTNEKRRLQN.

Belongs to the bacterial ribosomal protein bS20 family.

Functionally, binds directly to 16S ribosomal RNA. The polypeptide is Small ribosomal subunit protein bS20 (Onion yellows phytoplasma (strain OY-M)).